Here is a 498-residue protein sequence, read N- to C-terminus: Histidine--tRNA ligase (498 aa).

The protein belongs to the class-II aminoacyl-tRNA synthetase family. As to quaternary structure, homodimer.

Its subcellular location is the cytoplasm. The enzyme catalyses tRNA(His) + L-histidine + ATP = L-histidyl-tRNA(His) + AMP + diphosphate + H(+). The chain is Histidine--tRNA ligase from Bartonella quintana (strain Toulouse) (Rochalimaea quintana).